A 353-amino-acid chain; its full sequence is Protein-arginine kinase (353 aa).

Positions 24–256 (IVLSSRIRLA…RTVIDTEEQA (233 aa)) constitute a Phosphagen kinase C-terminal domain. Residues 27 to 31 (SSRIR), His93, Arg127, 178 to 182 (RASVM), and 209 to 214 (RGLYGE) each bind ATP. Positions 339-344 (RDVRRA) match the RDXXRA motif of the pArg binding pocket involved in allosteric regulation motif.

It belongs to the ATP:guanido phosphotransferase family.

The enzyme catalyses L-arginyl-[protein] + ATP = N(omega)-phospho-L-arginyl-[protein] + ADP + H(+). Its activity is regulated as follows. Appears to be allosterically activated by the binding of pArg-containing polypeptides to the pArg-binding pocket localized in the C-terminal domain of McsB. In terms of biological role, catalyzes the specific phosphorylation of arginine residues in proteins. The chain is Protein-arginine kinase from Symbiobacterium thermophilum (strain DSM 24528 / JCM 14929 / IAM 14863 / T).